The following is a 301-amino-acid chain: Probable serine acetyltransferase 3 (301 aa).

A disordered region spans residues 280–301 (IGKKAEPQRELPGVTMEQRWSD).

The protein belongs to the transferase hexapeptide repeat family. In terms of assembly, homomultimer.

The enzyme catalyses L-serine + acetyl-CoA = O-acetyl-L-serine + CoA. The protein operates within amino-acid biosynthesis; L-cysteine biosynthesis; L-cysteine from L-serine: step 1/2. The protein is Probable serine acetyltransferase 3 (SAT3) of Oryza sativa subsp. japonica (Rice).